The chain runs to 1038 residues: Ras GTPase-activating protein 1 (1038 aa).

Position 1 is an N-acetylmethionine (M1). Residues 1–16 (MMAAEAGSEEGGPATA) are compositionally biased toward low complexity. Disordered regions lie at residues 1 to 24 (MMAA…AAAT) and 117 to 152 (ETLG…SLDG). The segment covering 124–135 (GFPPLPPPPLLP) has biased composition (pro residues). The SH2 1 domain maps to 172–263 (WYHGKLDRTI…LKGEKLLYPV (92 aa)). An SH3 domain is found at 270-332 (EDRRRVRAIL…VEDLVEEVGR (63 aa)). Positions 342-432 (WFHGKISKQE…VEGYYLKEPV (91 aa)) constitute an SH2 2 domain. Residues 465–568 (NIVKKGYLLK…WMKGLQAFCS (104 aa)) enclose the PH domain. Residues 568 to 681 (SLRKSSPGTS…QKGHATDEWF (114 aa)) form the C2 domain. Phosphotyrosine is present on Y606. Residues 755–965 (KLESLLLCTL…HRMIMFLDEL (211 aa)) form the Ras-GAP domain. S822 is modified (phosphoserine).

In terms of assembly, interacts with SQSTM1. Interacts with SPSB1; the interaction does not promote degradation. Interacts with CAV2 (tyrosine phosphorylated form). Directly interacts with NCK1. Interacts with PDGFRB (tyrosine phosphorylated). Interacts (via SH2 domain) with the 'Tyr-9' phosphorylated form of PDPK1. Interacts with tyrosine-phosphorylated EPHB4. In terms of processing, phosphorylated by SRC and LCK. The phosphorylation SRC inhibits its ability to stimulate the Ras-GTPase activity, whereas phosphorylation by LCK does not display any effect on stimulation activity.

It localises to the cytoplasm. Inhibitory regulator of the Ras-cyclic AMP pathway. Stimulates the GTPase of normal but not oncogenic Ras p21. This is Ras GTPase-activating protein 1 (Rasa1) from Rattus norvegicus (Rat).